The sequence spans 408 residues: Prenyltransferase criF (408 aa).

Residues Arg94, Lys181, Tyr183, Arg248, Lys250, Tyr252, Gln334, Tyr336, Tyr400, and Tyr404 each coordinate dimethylallyl diphosphate.

The protein belongs to the tryptophan dimethylallyltransferase family. As to quaternary structure, homodimer.

The enzyme catalyses preechinulin + dimethylallyl diphosphate = tardioxopiperazine B + diphosphate. It catalyses the reaction preechinulin + dimethylallyl diphosphate = tardioxopiperazine A + diphosphate. It carries out the reaction tardioxopiperazine A + dimethylallyl diphosphate = echinulin + diphosphate. The catalysed reaction is tardioxopiperazine A + dimethylallyl diphosphate = variecolorin L + diphosphate. The enzyme catalyses neoechinulin A + dimethylallyl diphosphate = variecolorin G + diphosphate. It catalyses the reaction neoechinulin A + dimethylallyl diphosphate = isoechinulin A + diphosphate. It carries out the reaction isoechinulin A + dimethylallyl diphosphate = dehydroechinulin + diphosphate. The catalysed reaction is neoechinulin B + dimethylallyl diphosphate = isoechinulin B + diphosphate. Its pathway is secondary metabolite biosynthesis. The protein operates within alkaloid biosynthesis. Functionally, prenyltransferase; part of the gene cluster that mediates the biosynthesis of echinulin family alkaloid. The pathway begins with the biosynthesis of the cyclic dipeptide cyclo-L-Trp-L-Ala (cyclo-TA) by the NRPS criC via condensation of L-alanine and L-tryptophan. The prenyltransferase criA then catalyzes the first prenylation step, a reverse prenylation reaction at C2, to yield preechinulin. Preechinulin is the substrate of the cytochrome P450 monooxygenase criE that catalyzes the formation of the double bond between C10 and C11 to produce neoechulin A. The unique prenyltransferase criF functions as a competitive enzyme with criE for preechinulin metabolization and uses preechinulin for effective regiospecific prenylations. Preechinulin is prenylated by criF at C5 or C7. C7-prenylation leads to accumulation of tardioxopiperazine B without further modification by criF. In contrast, the C5-prenylated tardioxopiperazine A can be prenylated again by criF, predominantly at C7 to form echinulin or less frequently at C4 to give variecolorin L. CriF also accepts neoechilunin A to produce varlecolorin G (prenylation at C5) or isoechinulin A (prenylation at C7). CriF further converts isoechinulin A into dehydroechinulin. Moreover, a yet unidentified enzyme can also convert neoechilunin A into neoechilunin B by introducing a double bond between positions C14 and C17 and thus provides a further substrate to criF for C5 and C7 prenylation. This is Prenyltransferase criF from Aspergillus cristatus (Chinese Fuzhuan brick tea-fermentation fungus).